The chain runs to 176 residues: Methylmalonyl-CoA epimerase, mitochondrial (176 aa).

The transit peptide at 1–36 directs the protein to the mitochondrion; the sequence is MARVLKAAAANAVGLFSRLQAPIPTVRASSTSQPLD. The VOC domain maps to 47–176; the sequence is RLNHVAIAVP…GGVLVELEQA (130 aa). Histidine 50 provides a ligand contact to Co(2+). Position 114 is an N6-succinyllysine (lysine 114). Histidine 122 is a Co(2+) binding site. Lysine 150 bears the N6-acetyllysine; alternate mark. Lysine 150 bears the N6-succinyllysine; alternate mark. Glutamate 172 serves as a coordination point for Co(2+).

The protein belongs to the methylmalonyl-CoA epimerase family.

The protein resides in the mitochondrion. The enzyme catalyses (R)-methylmalonyl-CoA = (S)-methylmalonyl-CoA. Functionally, methylmalonyl-CoA epimerase involved in propionyl-CoA metabolism. This is Methylmalonyl-CoA epimerase, mitochondrial from Homo sapiens (Human).